Consider the following 228-residue polypeptide: Cytochrome c oxidase subunit 2 (228 aa).

Residues 1–26 are Mitochondrial intermembrane-facing; the sequence is MTTWANMNLQDSASPIMEQLIYFHDH. The chain crosses the membrane as a helical span at residues 27–48; that stretch reads ALMIIIMILMVVSYMMIAMVFN. Over 49 to 62 the chain is Mitochondrial matrix; sequence KYINRFLLEGQMIE. Residues 63–82 form a helical membrane-spanning segment; the sequence is LAWTIAPAVILIFIAVPSLR. At 83–228 the chain is on the mitochondrial intermembrane side; that stretch reads LLYLMDEINT…FINWILKMNM (146 aa). Cu cation contacts are provided by His161, Cys196, Glu198, Cys200, His204, and Met207. Glu198 contributes to the Mg(2+) binding site.

The protein belongs to the cytochrome c oxidase subunit 2 family. In terms of assembly, component of the cytochrome c oxidase (complex IV, CIV), a multisubunit enzyme composed of a catalytic core of 3 subunits and several supernumerary subunits. The complex exists as a monomer or a dimer and forms supercomplexes (SCs) in the inner mitochondrial membrane with ubiquinol-cytochrome c oxidoreductase (cytochrome b-c1 complex, complex III, CIII). Cu cation is required as a cofactor.

It is found in the mitochondrion inner membrane. The catalysed reaction is 4 Fe(II)-[cytochrome c] + O2 + 8 H(+)(in) = 4 Fe(III)-[cytochrome c] + 2 H2O + 4 H(+)(out). In terms of biological role, component of the cytochrome c oxidase, the last enzyme in the mitochondrial electron transport chain which drives oxidative phosphorylation. The respiratory chain contains 3 multisubunit complexes succinate dehydrogenase (complex II, CII), ubiquinol-cytochrome c oxidoreductase (cytochrome b-c1 complex, complex III, CIII) and cytochrome c oxidase (complex IV, CIV), that cooperate to transfer electrons derived from NADH and succinate to molecular oxygen, creating an electrochemical gradient over the inner membrane that drives transmembrane transport and the ATP synthase. Cytochrome c oxidase is the component of the respiratory chain that catalyzes the reduction of oxygen to water. Electrons originating from reduced cytochrome c in the intermembrane space (IMS) are transferred via the dinuclear copper A center (CU(A)) of subunit 2 and heme A of subunit 1 to the active site in subunit 1, a binuclear center (BNC) formed by heme A3 and copper B (CU(B)). The BNC reduces molecular oxygen to 2 water molecules using 4 electrons from cytochrome c in the IMS and 4 protons from the mitochondrial matrix. The protein is Cytochrome c oxidase subunit 2 (COII) of Periplaneta americana (American cockroach).